Reading from the N-terminus, the 380-residue chain is Peptide chain release factor 1-like, mitochondrial (380 aa).

A mitochondrion-targeting transit peptide spans 1–26; that stretch reads MRSRVLWGAARWLWPRRAVGPARRPL. Residues 63–117 adopt a coiled-coil conformation; sequence ELLAVIKLLNEKERELRETEHLLHDENEDLRKLAENEITLCQKEITQLKHQIILL. Residues 236-300 form a GGQ domain region; sequence PKDLRIDTKR…LRAKLYSMHL (65 aa). A GGQ motif is present at residues 250–252; it reads GGQ. At Gln252 the chain carries N5-methylglutamine.

This sequence belongs to the prokaryotic/mitochondrial release factor family. Methylation of glutamine in the GGQ triplet by HEMK1 is conserved from bacteria to mammals. As to expression, expressed in skeletal muscle (at protein level).

Its subcellular location is the mitochondrion. In terms of biological role, mitochondrial peptide chain release factor that directs the termination of translation in response to the peptide chain termination codons UAA and UAG. The protein is Peptide chain release factor 1-like, mitochondrial of Homo sapiens (Human).